Reading from the N-terminus, the 226-residue chain is LIM domain-containing protein PLIM2a (226 aa).

2 LIM zinc-binding domains span residues 8 to 68 (DKCK…LFKE) and 104 to 164 (DKCA…LFLE). Residues 173-226 (QAAANHRRSASSGGASPPSDDHKPDDTASIPEAKEDDAAPEAAGEEEPEPVVES) are disordered. Residues 191-209 (SDDHKPDDTASIPEAKEDD) show a composition bias toward basic and acidic residues. The segment covering 210-226 (AAPEAAGEEEPEPVVES) has biased composition (acidic residues).

Interacts with F-actin. In terms of tissue distribution, predominantly expressed in flowers, in the tapetum and in pollen grains. Detected in leaves and stems.

The protein resides in the cytoplasm. It localises to the cytoskeleton. Binds to actin filaments and promotes cross-linking into thick bundles. Has an actin-stabilizing activity. The actin regulatory activities are inhibited by pH &gt; 6.8 but are [Ca(2+)] independent. This chain is LIM domain-containing protein PLIM2a, found in Arabidopsis thaliana (Mouse-ear cress).